The chain runs to 1866 residues: Protein NLRC5 (1866 aa).

The segment at 105–135 (GAEGKSQPESQLHHGLKRPHQSCGSSPRRKQ) is disordered. The NACHT domain occupies 222-539 (RVTVLLGKAG…PKVNKDTLTQ (318 aa)). 228–235 (GKAGMGKT) serves as a coordination point for ATP. LRR repeat units lie at residues 599–622 (LKKL…VDET), 713–737 (MGRL…LVKA), 741–765 (CPQL…IVEV), 769–792 (LPRL…CLAR), 869–892 (GPHL…LMAE), 897–921 (LHIA…VLRA), 930–953 (ELHI…EQKG), 976–1000 (SRRM…ALGG), 1004–1026 (LGHL…RLAQ), 1031–1058 (LGAL…CFST), 1138–1161 (LELQ…CLPQ), 1162–1184 (LPQL…FLLA), 1242–1265 (CKDL…CLLE), 1272–1294 (ISGL…LLET), 1462–1488 (CARL…LLQS), 1493–1516 (LSEL…HLAS), 1521–1544 (CHHL…ALMR), 1554–1577 (RLDL…LSQM), 1578–1600 (TCLQ…HLSE), 1605–1628 (ATSL…HLAT), 1633–1656 (LPEL…QLAE), 1661–1684 (CRRL…GLAQ), 1687–1714 (PQHL…ALDG), 1715–1739 (SPHL…CMEL), 1741–1762 (LLRQ…LLTS), and 1795–1818 (MGRL…LLAE).

This sequence belongs to the NLRP family. In terms of assembly, interacts with CHUK and IKBKB; prevents CHUK and IKBKB phosphorylation and inhibits their kinase activity. Interacts with RIGI and IFIH1; blocks the interaction of MAVS to RIGI. As to expression, expressed in spleen, thymus, lung, brain, tonsil, heart and prostate.

The protein localises to the cytoplasm. In terms of biological role, probable regulator of the NF-kappa-B and type I interferon signaling pathways. May also regulate the type II interferon signaling pathway. Plays a role in homeostatic control of innate immunity and in antiviral defense mechanisms. The protein is Protein NLRC5 (NLRC5) of Homo sapiens (Human).